Consider the following 976-residue polypeptide: Ephrin type-B receptor 4b (976 aa).

An N-terminal signal peptide occupies residues methionine 1–alanine 23. The Extracellular portion of the chain corresponds to glutamate 24–glycine 541. The Eph LBD domain maps to glutamate 25–arginine 204. Intrachain disulfides connect cysteine 69–cysteine 186 and cysteine 103–cysteine 113. 2 Fibronectin type-III domains span residues proline 326 to aspartate 434 and proline 438 to aspartate 529. Residues valine 542–phenylalanine 562 form a helical membrane-spanning segment. Residues arginine 563–tyrosine 976 lie on the Cytoplasmic side of the membrane. Residues valine 613–leucine 897 enclose the Protein kinase domain. ATP is bound by residues isoleucine 619 to valine 627 and lysine 645. Aspartate 738 functions as the Proton acceptor in the catalytic mechanism. The 65-residue stretch at serine 906–histidine 970 folds into the SAM domain.

It belongs to the protein kinase superfamily. Tyr protein kinase family. Ephrin receptor subfamily.

The protein resides in the cell membrane. The catalysed reaction is L-tyrosyl-[protein] + ATP = O-phospho-L-tyrosyl-[protein] + ADP + H(+). Receptor tyrosine kinase which binds promiscuously transmembrane ephrin-B family ligands residing on adjacent cells, leading to contact-dependent bidirectional signaling into neighboring cells. The signaling pathway downstream of the receptor is referred to as forward signaling while the signaling pathway downstream of the ephrin ligand is referred to as reverse signaling. Together with its cognate ligand/functional ligand EFNB2 is involved in the regulation of cell adhesion and cell migration, and plays a central role in heart morphogenesis, angiogenesis and blood vessel remodeling and permeability. EPHB4-mediated forward signaling controls cellular repulsion and segregation from EFNB2-expressing cells. Involved in somitogenesis. The polypeptide is Ephrin type-B receptor 4b (Danio rerio (Zebrafish)).